Consider the following 316-residue polypeptide: CD276 antigen (316 aa).

A signal peptide spans 1-28 (MLRGWGGPSVGVCVRTALGVLCLCLTGA). In terms of domain architecture, Ig-like V-type spans 29–139 (VEVQVSEDPV…DSAAVSLQVA (111 aa)). Residues 29 to 248 (VEVQVSEDPV…GQPLTFPPEA (220 aa)) are Extracellular-facing. Residues asparagine 104, asparagine 189, and asparagine 215 are each glycosylated (N-linked (GlcNAc...) asparagine). The region spanning 145–238 (PSMTLEPNKD…QDAHGSVTIT (94 aa)) is the Ig-like C2-type domain. Residues cysteine 165 and cysteine 220 are joined by a disulfide bond. A helical transmembrane segment spans residues 249 to 269 (LWVTVGLSVCLVVLLVALAFV). At 270 to 316 (CWRKIKQSCEEENAGAEDQDGDGEGSKTALRPLKPSENKEDDGQEIA) the chain is on the cytoplasmic side. Over residues 280 to 292 (EENAGAEDQDGDG) the composition is skewed to acidic residues. The interval 280–316 (EENAGAEDQDGDGEGSKTALRPLKPSENKEDDGQEIA) is disordered.

Belongs to the immunoglobulin superfamily. BTN/MOG family. Interacts with TREML2 and this interaction enhances T-cell activation. In terms of tissue distribution, ubiquitous.

It localises to the membrane. Functionally, modulates T-cell-mediated immune responses and the development of acute and chronic transplant rejection. Plays a positive regulatory role in bone formation and has a dual role in the bone-immune interface. Induces antitumor immunity as it activates both acquired and innate immunity leading to natural killer cell and CD8 T-cell dependent killing of tumor cells. This chain is CD276 antigen (Cd276), found in Mus musculus (Mouse).